Reading from the N-terminus, the 556-residue chain is Oxygen-dependent choline dehydrogenase (556 aa).

4–33 contributes to the FAD binding site; sequence DYIIIGAGSAGNVLATRLTEDPNTSVLLLE. The active-site Proton acceptor is histidine 473.

The protein belongs to the GMC oxidoreductase family. FAD serves as cofactor.

It carries out the reaction choline + A = betaine aldehyde + AH2. The enzyme catalyses betaine aldehyde + NAD(+) + H2O = glycine betaine + NADH + 2 H(+). It participates in amine and polyamine biosynthesis; betaine biosynthesis via choline pathway; betaine aldehyde from choline (cytochrome c reductase route): step 1/1. Involved in the biosynthesis of the osmoprotectant glycine betaine. Catalyzes the oxidation of choline to betaine aldehyde and betaine aldehyde to glycine betaine at the same rate. In Shigella flexneri serotype 5b (strain 8401), this protein is Oxygen-dependent choline dehydrogenase.